The sequence spans 339 residues: UDP-3-O-acylglucosamine N-acyltransferase (339 aa).

Catalysis depends on His238, which acts as the Proton acceptor.

The protein belongs to the transferase hexapeptide repeat family. LpxD subfamily. Homotrimer.

It carries out the reaction a UDP-3-O-[(3R)-3-hydroxyacyl]-alpha-D-glucosamine + a (3R)-hydroxyacyl-[ACP] = a UDP-2-N,3-O-bis[(3R)-3-hydroxyacyl]-alpha-D-glucosamine + holo-[ACP] + H(+). The protein operates within bacterial outer membrane biogenesis; LPS lipid A biosynthesis. Functionally, catalyzes the N-acylation of UDP-3-O-acylglucosamine using 3-hydroxyacyl-ACP as the acyl donor. Is involved in the biosynthesis of lipid A, a phosphorylated glycolipid that anchors the lipopolysaccharide to the outer membrane of the cell. This chain is UDP-3-O-acylglucosamine N-acyltransferase, found in Aeromonas hydrophila subsp. hydrophila (strain ATCC 7966 / DSM 30187 / BCRC 13018 / CCUG 14551 / JCM 1027 / KCTC 2358 / NCIMB 9240 / NCTC 8049).